A 431-amino-acid chain; its full sequence is Adenylosuccinate synthetase (431 aa).

Residues 12–18 (GDEGKGK) and 40–42 (GHT) each bind GTP. Catalysis depends on Asp-13, which acts as the Proton acceptor. Mg(2+) contacts are provided by Asp-13 and Gly-40. Residues 13 to 16 (DEGK), 38 to 41 (NAGH), Thr-129, Arg-143, Gln-224, Thr-239, and Arg-303 contribute to the IMP site. The active-site Proton donor is His-41. Residue 299–305 (VTTGRAR) participates in substrate binding. GTP contacts are provided by residues Arg-305, 331–333 (KLD), and 413–415 (GVG).

Belongs to the adenylosuccinate synthetase family. In terms of assembly, homodimer. The cofactor is Mg(2+).

The protein localises to the cytoplasm. The catalysed reaction is IMP + L-aspartate + GTP = N(6)-(1,2-dicarboxyethyl)-AMP + GDP + phosphate + 2 H(+). Its pathway is purine metabolism; AMP biosynthesis via de novo pathway; AMP from IMP: step 1/2. Plays an important role in the de novo pathway of purine nucleotide biosynthesis. Catalyzes the first committed step in the biosynthesis of AMP from IMP. The chain is Adenylosuccinate synthetase from Mycobacteroides abscessus (strain ATCC 19977 / DSM 44196 / CCUG 20993 / CIP 104536 / JCM 13569 / NCTC 13031 / TMC 1543 / L948) (Mycobacterium abscessus).